The following is a 199-amino-acid chain: Molybdenum cofactor guanylyltransferase (199 aa).

GTP is bound by residues 12–14 (LAG), Lys-25, Asn-53, Asp-71, and Asp-101. Mg(2+) is bound at residue Asp-101.

It belongs to the MobA family. In terms of assembly, monomer. It depends on Mg(2+) as a cofactor.

It is found in the cytoplasm. The enzyme catalyses Mo-molybdopterin + GTP + H(+) = Mo-molybdopterin guanine dinucleotide + diphosphate. In terms of biological role, transfers a GMP moiety from GTP to Mo-molybdopterin (Mo-MPT) cofactor (Moco or molybdenum cofactor) to form Mo-molybdopterin guanine dinucleotide (Mo-MGD) cofactor. In Cupriavidus necator (strain ATCC 17699 / DSM 428 / KCTC 22496 / NCIMB 10442 / H16 / Stanier 337) (Ralstonia eutropha), this protein is Molybdenum cofactor guanylyltransferase.